We begin with the raw amino-acid sequence, 267 residues long: 4-hydroxy-tetrahydrodipicolinate reductase (267 aa).

NAD(+) contacts are provided by residues 8 to 13 (GAAGRM) and glutamate 34. Residue arginine 35 coordinates NADP(+). NAD(+) is bound by residues 98–100 (GST) and 122–125 (APNM). The active-site Proton donor/acceptor is histidine 155. Residue histidine 156 participates in (S)-2,3,4,5-tetrahydrodipicolinate binding. Lysine 159 (proton donor) is an active-site residue. 165 to 166 (GT) provides a ligand contact to (S)-2,3,4,5-tetrahydrodipicolinate.

The protein belongs to the DapB family.

The protein resides in the cytoplasm. It carries out the reaction (S)-2,3,4,5-tetrahydrodipicolinate + NAD(+) + H2O = (2S,4S)-4-hydroxy-2,3,4,5-tetrahydrodipicolinate + NADH + H(+). The catalysed reaction is (S)-2,3,4,5-tetrahydrodipicolinate + NADP(+) + H2O = (2S,4S)-4-hydroxy-2,3,4,5-tetrahydrodipicolinate + NADPH + H(+). The protein operates within amino-acid biosynthesis; L-lysine biosynthesis via DAP pathway; (S)-tetrahydrodipicolinate from L-aspartate: step 4/4. Functionally, catalyzes the conversion of 4-hydroxy-tetrahydrodipicolinate (HTPA) to tetrahydrodipicolinate. In Citrifermentans bemidjiense (strain ATCC BAA-1014 / DSM 16622 / JCM 12645 / Bem) (Geobacter bemidjiensis), this protein is 4-hydroxy-tetrahydrodipicolinate reductase.